Consider the following 761-residue polypeptide: Zinc finger protein 711 (761 aa).

5 C2H2-type zinc fingers span residues 383–408 (YPCH…HPDH), 414–436 (YQCT…LESH), 476–499 (HKCK…LAVH), 505–527 (HVCV…MRTH), and 533–556 (FHCQ…KSKH). A C2H2-type 6; atypical zinc finger spans residues 562 to 584 (FKCGHCPQAFADDKELQRHAEIF). Zn(2+)-binding residues include C564, C567, and H580. 6 C2H2-type zinc fingers span residues 590 to 613 (HQCP…ISVH), 619 to 641 (HKCD…SETH), 647 to 670 (HQCR…LSVH), 676 to 698 (FKCK…MKTH), 704 to 727 (YQCQ…ISIH), and 733 to 755 (HRCD…IMRH).

Belongs to the krueppel C2H2-type zinc-finger protein family. In terms of tissue distribution, present in ovary and brain but not in other tissues (at protein level).

It localises to the nucleus. Its subcellular location is the cytoplasm. In terms of biological role, transcription regulator required for brain development. Probably acts as a transcription factor that binds to the promoter of target genes, leading to activate their expression. The polypeptide is Zinc finger protein 711 (znf711) (Danio rerio (Zebrafish)).